A 273-amino-acid polypeptide reads, in one-letter code: Probable ribosomal RNA small subunit methyltransferase A (273 aa).

Asn-26, Leu-28, Gly-53, Glu-74, Asp-98, and Asn-113 together coordinate S-adenosyl-L-methionine.

The protein belongs to the class I-like SAM-binding methyltransferase superfamily. rRNA adenine N(6)-methyltransferase family. RsmA subfamily.

The protein resides in the cytoplasm. Specifically dimethylates two adjacent adenosines in the loop of a conserved hairpin near the 3'-end of 16S rRNA in the 30S particle. May play a critical role in biogenesis of 30S subunits. In Methanothermobacter thermautotrophicus (strain ATCC 29096 / DSM 1053 / JCM 10044 / NBRC 100330 / Delta H) (Methanobacterium thermoautotrophicum), this protein is Probable ribosomal RNA small subunit methyltransferase A.